A 194-amino-acid polypeptide reads, in one-letter code: Probable GTP-binding protein EngB (194 aa).

Residues 22–194 enclose the EngB-type G domain; it reads GKPEIALVGR…EVWHWIEQHI (173 aa). GTP is bound by residues 30-37, 57-61, 75-78, 142-145, and 175-177; these read GRSNVGKS, GKTQT, DVPG, TKSD, and FSS. 2 residues coordinate Mg(2+): Ser37 and Thr59.

It belongs to the TRAFAC class TrmE-Era-EngA-EngB-Septin-like GTPase superfamily. EngB GTPase family. The cofactor is Mg(2+).

Functionally, necessary for normal cell division and for the maintenance of normal septation. The chain is Probable GTP-binding protein EngB from Leuconostoc mesenteroides subsp. mesenteroides (strain ATCC 8293 / DSM 20343 / BCRC 11652 / CCM 1803 / JCM 6124 / NCDO 523 / NBRC 100496 / NCIMB 8023 / NCTC 12954 / NRRL B-1118 / 37Y).